Reading from the N-terminus, the 81-residue chain is Delta-actitoxin-Aeq2d (81 aa).

Residues 1–19 form the signal peptide; it reads MNRLMILVFAAVILALASA. Residues 20-25 constitute a propeptide that is removed on maturation; that stretch reads DDVDIA. 3 disulfide bridges follow: cysteine 31–cysteine 78, cysteine 33–cysteine 68, and cysteine 61–cysteine 79.

This sequence belongs to the sea anemone sodium channel inhibitory toxin family. Type I subfamily.

It is found in the secreted. It localises to the nematocyst. In terms of biological role, binds specifically to voltage-gated sodium channels (Nav), thereby delaying their inactivation during signal transduction. Causes death to crabs. In Actinia equina (Beadlet anemone), this protein is Delta-actitoxin-Aeq2d.